We begin with the raw amino-acid sequence, 194 residues long: NAD(P)H:quinone oxidoreductase (194 aa).

It belongs to the SsuE family. As to quaternary structure, homotetramer. The cofactor is FMN.

It catalyses the reaction a quinone + NADH + H(+) = a quinol + NAD(+). The enzyme catalyses a quinone + NADPH + H(+) = a quinol + NADP(+). In terms of biological role, the enzyme apparently serves as a quinone reductase in connection with conjugation reactions of hydroquinones involved in detoxification pathways. The chain is NAD(P)H:quinone oxidoreductase from Solanum tuberosum (Potato).